The primary structure comprises 134 residues: ATP synthase epsilon chain (134 aa).

The protein belongs to the ATPase epsilon chain family. In terms of assembly, F-type ATPases have 2 components, CF(1) - the catalytic core - and CF(0) - the membrane proton channel. CF(1) has five subunits: alpha(3), beta(3), gamma(1), delta(1), epsilon(1). CF(0) has three main subunits: a, b and c.

It is found in the cell membrane. In terms of biological role, produces ATP from ADP in the presence of a proton gradient across the membrane. The chain is ATP synthase epsilon chain from Listeria innocua serovar 6a (strain ATCC BAA-680 / CLIP 11262).